Here is a 721-residue protein sequence, read N- to C-terminus: 1,4-alpha-glucan branching enzyme GlgB (721 aa).

D400 functions as the Nucleophile in the catalytic mechanism. Residue E453 is the Proton donor of the active site.

It belongs to the glycosyl hydrolase 13 family. GlgB subfamily. Monomer.

The catalysed reaction is Transfers a segment of a (1-&gt;4)-alpha-D-glucan chain to a primary hydroxy group in a similar glucan chain.. It functions in the pathway glycan biosynthesis; glycogen biosynthesis. Its function is as follows. Catalyzes the formation of the alpha-1,6-glucosidic linkages in glycogen by scission of a 1,4-alpha-linked oligosaccharide from growing alpha-1,4-glucan chains and the subsequent attachment of the oligosaccharide to the alpha-1,6 position. The chain is 1,4-alpha-glucan branching enzyme GlgB from Chlamydia felis (strain Fe/C-56) (Chlamydophila felis).